The sequence spans 315 residues: Small ribosomal subunit protein uS3 (315 aa).

One can recognise a KH type-2 domain in the interval Ile38–Lys106. The tract at residues Ala211–Glu315 is disordered. A compositionally biased stretch (basic residues) spans Gln222–Pro232. Residues Ala265–Glu315 show a composition bias toward low complexity.

It belongs to the universal ribosomal protein uS3 family. As to quaternary structure, part of the 30S ribosomal subunit. Forms a tight complex with proteins S10 and S14.

In terms of biological role, binds the lower part of the 30S subunit head. Binds mRNA in the 70S ribosome, positioning it for translation. This chain is Small ribosomal subunit protein uS3, found in Frankia casuarinae (strain DSM 45818 / CECT 9043 / HFP020203 / CcI3).